Consider the following 270-residue polypeptide: Pre-mRNA-splicing factor CWC23 (270 aa).

Residues 12–84 form the J domain; the sequence is DLYRILHIHV…EHKKEYDIWY (73 aa).

This sequence belongs to the DnaJ family. As to quaternary structure, associated with the spliceosome.

The protein resides in the cytoplasm. It localises to the nucleus. In terms of biological role, involved in pre-mRNA splicing. May be involved in endoplasmic reticulum-associated protein degradation (ERAD) and required for growth at low and high temperatures. The polypeptide is Pre-mRNA-splicing factor CWC23 (CWC23) (Kluyveromyces lactis (strain ATCC 8585 / CBS 2359 / DSM 70799 / NBRC 1267 / NRRL Y-1140 / WM37) (Yeast)).